A 718-amino-acid chain; its full sequence is DNA ligase (718 aa).

NAD(+) contacts are provided by residues 44-48 (DADYD), 93-94 (SL), and Glu127. The N6-AMP-lysine intermediate role is filled by Lys129. Residues Arg150, Glu186, Lys302, and Lys326 each contribute to the NAD(+) site. Cys432, Cys435, Cys456, and Cys462 together coordinate Zn(2+). Residues 640-718 (TAGSPVAGKT…EDEWLALISG (79 aa)) enclose the BRCT domain.

This sequence belongs to the NAD-dependent DNA ligase family. LigA subfamily. The cofactor is Mg(2+). It depends on Mn(2+) as a cofactor.

The catalysed reaction is NAD(+) + (deoxyribonucleotide)n-3'-hydroxyl + 5'-phospho-(deoxyribonucleotide)m = (deoxyribonucleotide)n+m + AMP + beta-nicotinamide D-nucleotide.. In terms of biological role, DNA ligase that catalyzes the formation of phosphodiester linkages between 5'-phosphoryl and 3'-hydroxyl groups in double-stranded DNA using NAD as a coenzyme and as the energy source for the reaction. It is essential for DNA replication and repair of damaged DNA. The polypeptide is DNA ligase (Rhizobium etli (strain CIAT 652)).